Consider the following 245-residue polypeptide: 1-(5-phosphoribosyl)-5-[(5-phosphoribosylamino)methylideneamino] imidazole-4-carboxamide isomerase (245 aa).

The active-site Proton acceptor is the aspartate 7. Aspartate 129 (proton donor) is an active-site residue.

This sequence belongs to the HisA/HisF family.

The protein resides in the cytoplasm. The catalysed reaction is 1-(5-phospho-beta-D-ribosyl)-5-[(5-phospho-beta-D-ribosylamino)methylideneamino]imidazole-4-carboxamide = 5-[(5-phospho-1-deoxy-D-ribulos-1-ylimino)methylamino]-1-(5-phospho-beta-D-ribosyl)imidazole-4-carboxamide. The protein operates within amino-acid biosynthesis; L-histidine biosynthesis; L-histidine from 5-phospho-alpha-D-ribose 1-diphosphate: step 4/9. The polypeptide is 1-(5-phosphoribosyl)-5-[(5-phosphoribosylamino)methylideneamino] imidazole-4-carboxamide isomerase (Enterobacter sp. (strain 638)).